We begin with the raw amino-acid sequence, 432 residues long: Succinate--CoA ligase [GDP-forming] subunit beta, mitochondrial (432 aa).

The N-terminal 37 residues, 1-37 (MAAPVGAQARKLLRDLVLRPPLLAARSQVVQLTSRRW), are a transit peptide targeting the mitochondrion. Residues 46 to 274 (KKLMSDNGVK…NAEFRQKDIF (229 aa)) form the ATP-grasp domain. Gln-57 is a binding site for GTP. Lys-73 bears the N6-acetyllysine mark. Residue Lys-78 is modified to N6-succinyllysine. Residue 90–92 (GRG) participates in GTP binding. N6-acetyllysine occurs at positions 111, 132, and 139. GTP is bound at residue Leu-146. Ser-161 carries the phosphoserine modification. N6-acetyllysine occurs at positions 200, 218, and 227. Mg(2+) is bound by residues Asn-243 and Asp-257. The residue at position 271 (Lys-271) is an N6-acetyllysine. Asn-308 is a binding site for substrate. Residue Lys-338 is modified to N6-succinyllysine. An N6-acetyllysine modification is found at Lys-347. 365–367 (GIV) serves as a coordination point for substrate. 2 positions are modified to N6-acetyllysine: Lys-386 and Lys-423.

Belongs to the succinate/malate CoA ligase beta subunit family. GTP-specific subunit beta subfamily. As to quaternary structure, heterodimer of an alpha and a beta subunit. The beta subunit determines specificity for GTP. Mg(2+) is required as a cofactor.

The protein localises to the mitochondrion. It catalyses the reaction GTP + succinate + CoA = succinyl-CoA + GDP + phosphate. It functions in the pathway carbohydrate metabolism; tricarboxylic acid cycle; succinate from succinyl-CoA (ligase route): step 1/1. In terms of biological role, GTP-specific succinyl-CoA synthetase functions in the citric acid cycle (TCA), coupling the hydrolysis of succinyl-CoA to the synthesis of GTP and thus represents the only step of substrate-level phosphorylation in the TCA. The beta subunit provides nucleotide specificity of the enzyme and binds the substrate succinate, while the binding sites for coenzyme A and phosphate are found in the alpha subunit. This chain is Succinate--CoA ligase [GDP-forming] subunit beta, mitochondrial, found in Bos taurus (Bovine).